Here is a 633-residue protein sequence, read N- to C-terminus: Chaperone protein HtpG (633 aa).

Residues 1–344 (MSLQPQAETL…SNDLPLNISR (344 aa)) form an a; substrate-binding region. Residues 345–560 (ELLQSNEVIN…ENEMSGHLQR (216 aa)) form a b region. The segment at 561 to 633 (LLIQTGQDFM…KGLNELLLDS (73 aa)) is c.

It belongs to the heat shock protein 90 family. As to quaternary structure, homodimer.

Its subcellular location is the cytoplasm. In terms of biological role, molecular chaperone. Has ATPase activity. The protein is Chaperone protein HtpG of Coxiella burnetii (strain RSA 331 / Henzerling II).